Here is a 513-residue protein sequence, read N- to C-terminus: ATP synthase subunit alpha (513 aa).

169-176 (GDRQTGKT) lines the ATP pocket.

Belongs to the ATPase alpha/beta chains family. F-type ATPases have 2 components, CF(1) - the catalytic core - and CF(0) - the membrane proton channel. CF(1) has five subunits: alpha(3), beta(3), gamma(1), delta(1), epsilon(1). CF(0) has three main subunits: a(1), b(2) and c(9-12). The alpha and beta chains form an alternating ring which encloses part of the gamma chain. CF(1) is attached to CF(0) by a central stalk formed by the gamma and epsilon chains, while a peripheral stalk is formed by the delta and b chains.

Its subcellular location is the cell inner membrane. The enzyme catalyses ATP + H2O + 4 H(+)(in) = ADP + phosphate + 5 H(+)(out). Functionally, produces ATP from ADP in the presence of a proton gradient across the membrane. The alpha chain is a regulatory subunit. The chain is ATP synthase subunit alpha from Actinobacillus succinogenes (strain ATCC 55618 / DSM 22257 / CCUG 43843 / 130Z).